The sequence spans 128 residues: Keratin-associated protein 21-1 (128 aa).

The tract at residues 11–117 is 51 X 2 AA repeats of G-[YCGS]; the sequence is GGCGYGSRYG…RYGCGYGSGC (107 aa).

The protein belongs to the KRTAP type 21 family. In terms of assembly, interacts with hair keratins. In terms of tissue distribution, strong expression in narrowly defined pattern restricted to the lower and middle cortical regions of the hair shaft in both developing and cycling hair. During hair follicle regression (catagen), expression levels decrease until expression is no longer detectable in follicles at resting stage (telogen).

Functionally, in the hair cortex, hair keratin intermediate filaments are embedded in an interfilamentous matrix, consisting of hair keratin-associated proteins (KRTAP), which are essential for the formation of a rigid and resistant hair shaft through their extensive disulfide bond cross-linking with abundant cysteine residues of hair keratins. The matrix proteins include the high-sulfur and high-glycine-tyrosine keratins. The sequence is that of Keratin-associated protein 21-1 (Krtap21-1) from Mus musculus (Mouse).